The primary structure comprises 984 residues: MSSTTVAEFANELKKTPETLLDQLKSAGVPKAAPTDALTEADKQRLLGFLKASHGTAEPERKKITLTKKSTSEIKQADATGRARTIQVEVRKKRTFIQRDDGHPATPEVQPVAEAPAAAPAAPRIDEAELARREEEARRQAELIRRQEEELAEKRRLREEAEAREREQAEKAERAEQAEQEAARIAAEKKAADAAAAAPAKEAAKPAAAPVAAAAAAAEQQAADTKLAAQTAATQAKEDAKAKAAAESKARADEEAARAKDLDERRRKALAEAEAIRAMMNAPARVLVPHKAPEKPQPEKAAVKGTLHKPAAPAARPGAPAAPGAAAAPGAAGAGKEVKSAKLSSSWAGDPAKKKEIKTRGDASGGVGRGNWRGGPRGRRGSNDRGGHEEHVQAAPVEARILEVHVPETITVAELAHKMAVKAQEVIKQLMKLGQMATINQSLDQDTAMILVEEMGHNAVVAALDDPEAFTDEDVSAQTAEALPRAPVVTVMGHVDHGKTSLLDYIRRAKVAAGEAGGITQHIGAYHVQTERGMVSFLDTPGHEAFTAMRARGAQATDIVILVVAADDGVMPQTKEAIKHAKAAGVPIVVAINKIDKPDASPDRVKQELVAEEVVPEEYGGDVPFVPVSAKTGQGIDDLLEQVLLQAEVLELKAPVDAAAKGLVIEAQLDKGRGPVATVLVQSGTLKTGDVVLAGSTYGRVRAMLDEDGRTIKSAGPSIPVEIQGLTEVPQAGDEFMVMSDERRAREIATYRAGKFRNTKLAKAQAANLQNMFTDLSAGEVQTLRIIIKADVQGSQEALAQSLLKLATDEVKVQIVYAGVGGISESDINLAIASKAIVIGFNVRADAGARKLAEGNGVQLNYYSIIYDAVDEIKVAMSGMLAPERREEIIGSAEIRTVFVASKIGTVAGSYITSGSVNRSAHFRLLRDNVVIYTGEVDSIKRMKDDVREVREGFECGIKLKNYNDIKEGDQLEFFEIKEIARTL.

Disordered regions lie at residues 92–267 (KKRT…ERRR) and 280–392 (MNAP…EEHV). The span at 104 to 123 (PATPEVQPVAEAPAAAPAAP) shows a compositional bias: low complexity. Residues 124 to 177 (RIDEAELARREEEARRQAELIRRQEEELAEKRRLREEAEAREREQAEKAERAEQ) are compositionally biased toward basic and acidic residues. The segment covering 193–235 (DAAAAAPAKEAAKPAAAPVAAAAAAAEQQAADTKLAAQTAATQ) has biased composition (low complexity). Composition is skewed to basic and acidic residues over residues 236 to 267 (AKED…ERRR) and 291 to 302 (KAPEKPQPEKAA). Residues 310 to 335 (PAAPAARPGAPAAPGAAAAPGAAGAG) show a composition bias toward low complexity. Basic and acidic residues predominate over residues 351-361 (PAKKKEIKTRG). The segment covering 363–375 (ASGGVGRGNWRGG) has biased composition (gly residues). Residues 381–392 (GSNDRGGHEEHV) are compositionally biased toward basic and acidic residues. The 170-residue stretch at 484–653 (PRAPVVTVMG…LLQAEVLELK (170 aa)) folds into the tr-type G domain. The interval 493 to 500 (GHVDHGKT) is G1. A GTP-binding site is contributed by 493 to 500 (GHVDHGKT). The tract at residues 518–522 (GITQH) is G2. The tract at residues 539 to 542 (DTPG) is G3. GTP-binding positions include 539-543 (DTPGH) and 593-596 (NKID). A G4 region spans residues 593–596 (NKID). The G5 stretch occupies residues 629 to 631 (SAK).

This sequence belongs to the TRAFAC class translation factor GTPase superfamily. Classic translation factor GTPase family. IF-2 subfamily.

The protein resides in the cytoplasm. One of the essential components for the initiation of protein synthesis. Protects formylmethionyl-tRNA from spontaneous hydrolysis and promotes its binding to the 30S ribosomal subunits. Also involved in the hydrolysis of GTP during the formation of the 70S ribosomal complex. This is Translation initiation factor IF-2 from Variovorax paradoxus (strain S110).